The chain runs to 100 residues: Ferredoxin-2 (100 aa).

In terms of domain architecture, 2Fe-2S ferredoxin-type spans 4–97 (YKVTLINEEE…DCTIMTHQES (94 aa)). [2Fe-2S] cluster-binding residues include Cys42, Cys47, Cys50, and Cys81.

Belongs to the 2Fe2S plant-type ferredoxin family. [2Fe-2S] cluster serves as cofactor.

In terms of biological role, ferredoxins are iron-sulfur proteins that transfer electrons in a wide variety of metabolic reactions. The chain is Ferredoxin-2 from Aphanothece sacrum.